A 217-amino-acid chain; its full sequence is Elongation factor Ts (217 aa).

Residues 80–83 (TDFV) form an involved in Mg(2+) ion dislocation from EF-Tu region.

It belongs to the EF-Ts family.

The protein localises to the cytoplasm. Its function is as follows. Associates with the EF-Tu.GDP complex and induces the exchange of GDP to GTP. It remains bound to the aminoacyl-tRNA.EF-Tu.GTP complex up to the GTP hydrolysis stage on the ribosome. The protein is Elongation factor Ts of Carboxydothermus hydrogenoformans (strain ATCC BAA-161 / DSM 6008 / Z-2901).